The primary structure comprises 364 residues: MVKLFIGNLPREATEQEIRSLFEQYGKVLECDIIKNYGFVHIEDKTAAEDAIRNLHHYKLHGVNINVEASKNKSKTSTKLHVGNISPTCTNKELRAKFEEYGPVIECDIVKDYAFVHMERAEDAVEAIRGLDNTEFQGKRMHVQLSTSRLRTAPGMGDQSGCYRCGKEGHWSKECPIDRSGRVADLTEQYNEQYGAVRTPYTMSYGDSLYYNNAYGALDAYYKRCRAARSYEAVAAAAASVYNYAEQTLSQLPQVQNTAMASHLTSTSLDPYDRHLLPTSGAAATAAAAAAAAAAVTAASTSYYGRDRSPLRRATAPVPTVGEGYGYGHESELSQASAAARNSLYDMARYEREQYADRARYSAF.

2 RRM domains span residues 2 to 72 and 78 to 148; these read VKLF…ASKN and TKLH…LSTS. Lys79 is covalently cross-linked (Glycyl lysine isopeptide (Lys-Gly) (interchain with G-Cter in SUMO2)). Ser86 carries the post-translational modification Phosphoserine. Lys92 is covalently cross-linked (Glycyl lysine isopeptide (Lys-Gly) (interchain with G-Cter in SUMO2)). Residues 160-177 form a CCHC-type zinc finger; sequence SGCYRCGKEGHWSKECPI. The tract at residues 196–364 is interaction with TNPO3; sequence AVRTPYTMSY…YADRARYSAF (169 aa). Ser309 carries the phosphoserine modification.

As to quaternary structure, interacts with TNPO3; the interaction mediates nuclear import of the protein and is disrupted by nuclear Ran bound to GTP. Interacts with EIF4G1 and WT1. Interacts with EIF4A1; the interaction is modulated under stress-induced conditions. Interacts with AGO1. Interacts with AGO2; the interaction occurs under both cell proliferation and differentiation conditions and in an RNA- and phosphorylation-independent manner. Interacts with DDX5; the interaction occurs in an RNA-independent manner. Interacts with RBPMS; the interaction allows cooperative assembly of RNA-bound stable cell-specific alternative splicing regulatory complexes. Post-translationally, phosphorylated. Phosphorylated in vitro on Ser-309 by SRPK1. Phosphorylation on Ser-309 is induced upon cell stress signaling, which alters its subcellular localization and may modulate its activity on IRES-mediated mRNA translation. Phosphorylation on Ser-309 is induced upon cell muscle differentiation.

It localises to the nucleus. The protein localises to the nucleolus. Its subcellular location is the nucleus speckle. The protein resides in the cytoplasm. It is found in the cytoplasmic granule. In terms of biological role, RNA-binding factor involved in multiple aspects of cellular processes like alternative splicing of pre-mRNA and translation regulation. Modulates alternative 5'-splice site and exon selection. Acts as a muscle cell differentiation-promoting factor. Activates exon skipping of the PTB pre-mRNA during muscle cell differentiation. Antagonizes the activity of the splicing factor PTBP1 to modulate muscle cell-specific exon selection of alpha tropomyosin. Binds to intronic pyrimidine-rich sequence of the TPM1 and MAPT pre-mRNAs. Required for the translational activation of PER1 mRNA in response to circadian clock. Binds directly to the 3'-UTR of the PER1 mRNA. Exerts a suppressive activity on Cap-dependent translation via binding to CU-rich responsive elements within the 3'UTR of mRNAs, a process increased under stress conditions or during myocytes differentiation. Recruits EIF4A1 to stimulate IRES-dependent translation initiation in respons to cellular stress. Associates to internal ribosome entry segment (IRES) in target mRNA species under stress conditions. Plays a role for miRNA-guided RNA cleavage and translation suppression by promoting association of AGO2-containing miRNPs with their cognate target mRNAs. Associates with miRNAs during muscle cell differentiation. Binds preferentially to 5'-CGCGCG[GCA]-3' motif in vitro. The chain is RNA-binding protein 4 (RBM4) from Macaca fascicularis (Crab-eating macaque).